The sequence spans 282 residues: Putative peroxisomal biogenesis factor 19 (282 aa).

Positions 73 to 95 (QEEAMKKAGADPSEGEGEQPLDP) are disordered. Cysteine 279 is subject to Cysteine methyl ester. The S-farnesyl cysteine moiety is linked to residue cysteine 279. Residues 280–282 (SIM) constitute a propeptide, removed in mature form.

The protein belongs to the peroxin-19 family.

It is found in the peroxisome. This chain is Putative peroxisomal biogenesis factor 19 (prx-19), found in Caenorhabditis elegans.